We begin with the raw amino-acid sequence, 386 residues long: Cell division protein FtsZ (386 aa).

GTP-binding positions include 20–24 (GGGGN), 107–109 (GTG), Glu-138, Arg-142, and Asn-186. The tract at residues 350 to 377 (LNQEQKTAAKAVNEQNAQGSKEPDYLDI) is disordered.

It belongs to the FtsZ family. As to quaternary structure, homodimer. Polymerizes to form a dynamic ring structure in a strictly GTP-dependent manner. Interacts directly with several other division proteins.

The protein resides in the cytoplasm. Essential cell division protein that forms a contractile ring structure (Z ring) at the future cell division site. The regulation of the ring assembly controls the timing and the location of cell division. One of the functions of the FtsZ ring is to recruit other cell division proteins to the septum to produce a new cell wall between the dividing cells. Binds GTP and shows GTPase activity. The protein is Cell division protein FtsZ of Sodalis glossinidius.